Reading from the N-terminus, the 142-residue chain is HTH-type transcriptional repressor NsrR (142 aa).

The HTH rrf2-type domain occupies 2–129 (QLTSFTDYGL…DRHTLAELVE (128 aa)). The H-T-H motif DNA-binding region spans 28 to 51 (ITEVTQVYGVSRNHMVKIINQLSH). Residues Cys91, Cys96, and Cys102 each contribute to the [2Fe-2S] cluster site.

[2Fe-2S] cluster is required as a cofactor.

In terms of biological role, nitric oxide-sensitive repressor of genes involved in protecting the cell against nitrosative stress. May require iron for activity. This chain is HTH-type transcriptional repressor NsrR, found in Proteus mirabilis (strain HI4320).